Here is a 124-residue protein sequence, read N- to C-terminus: Small ribosomal subunit protein eS8 (124 aa).

Over residues 1 to 22 (MQYQGRSKRSKTGARLRPRSKK) the composition is skewed to basic residues. Disordered regions lie at residues 1-40 (MQYQGRSKRSKTGARLRPRSKKSKSELGREPTETTVGEPR) and 102-124 (AGTARVTSRPGQDGQVNATRVDE). Positions 23–32 (SKSELGREPT) are enriched in basic and acidic residues. Polar residues predominate over residues 106–124 (RVTSRPGQDGQVNATRVDE).

Belongs to the eukaryotic ribosomal protein eS8 family. Part of the 30S ribosomal subunit.

The chain is Small ribosomal subunit protein eS8 from Halobacterium salinarum (strain ATCC 29341 / DSM 671 / R1).